The following is a 77-amino-acid chain: Large ribosomal subunit protein uL29 (77 aa).

Belongs to the universal ribosomal protein uL29 family.

The sequence is that of Large ribosomal subunit protein uL29 from Mycolicibacterium smegmatis (strain ATCC 700084 / mc(2)155) (Mycobacterium smegmatis).